A 548-amino-acid polypeptide reads, in one-letter code: Natural resistance-associated macrophage protein 1 (548 aa).

The segment at 1–38 is disordered; the sequence is MPGDMGPPKQGGTRYGSISSPPSPGPQQAPPGGTYLSE. Residues 1 to 55 lie on the Cytoplasmic side of the membrane; that stretch reads MPGDMGPPKQGGTRYGSISSPPSPGPQQAPPGGTYLSEKIPIPDTESGAFSLRKL. A helical membrane pass occupies residues 56 to 73; it reads WAFTGPGFLMSIAFLDPG. At 74–82 the chain is on the extracellular side; sequence NIESDLQAG. The helical transmembrane segment at 83-102 threads the bilayer; it reads AVAGFKLLWVLLWATVLGLL. Topologically, residues 103–139 are cytoplasmic; it reads CQRLAARLGVVTGKDLGEVCHLYYPKVPRILLWLTIE. The helical transmembrane segment at 140-160 threads the bilayer; that stretch reads LAIVGSDMQEVIGTAIAFSLL. The Extracellular portion of the chain corresponds to 161–164; it reads SAGR. The helical transmembrane segment at 165–184 threads the bilayer; that stretch reads IPLWGGVLITIVDTFFFLFL. Over 185 to 193 the chain is Cytoplasmic; it reads DNYGLRKLE. A helical transmembrane segment spans residues 194–214; the sequence is AFFGFLITIMALTFGYEYVVA. Residues 215 to 237 are Extracellular-facing; the sequence is RPAQGALLQGLFLPSCAGCGQPE. A helical membrane pass occupies residues 238–256; sequence LLQAVGIVGAIIMPHNIYL. Over 257–284 the chain is Cytoplasmic; that stretch reads HSSLVKSREVDRSRRADIREANMYFLIE. The helical transmembrane segment at 285–304 threads the bilayer; sequence ATIALSVSFLINLFVMAVFG. Residues 305–346 lie on the Extracellular side of the membrane; it reads QAFYKQTNQAAFNICANSSLHDYATIFPRNNLTVAVDIYQGG. Residues asparagine 321 and asparagine 335 are each glycosylated (N-linked (GlcNAc...) asparagine). The helical transmembrane segment at 347-366 threads the bilayer; that stretch reads VILGCLFGPAALYIWAVGLL. At 367–397 the chain is on the cytoplasmic side; sequence AAGQSSTMTGTYAGQFVMEGFLKLRWSRFAR. A helical membrane pass occupies residues 398–415; the sequence is VLLTRSCAILPTVLVAVF. Residues 416–426 lie on the Extracellular side of the membrane; it reads RDLRDLSGLND. Residues 427–447 form a helical membrane-spanning segment; that stretch reads LLNVLQSLLLPFAVLPILTFT. Residues 448–463 lie on the Cytoplasmic side of the membrane; it reads SMPAVMQEFANGLVSK. The chain crosses the membrane as a helical span at residues 464–485; it reads VISSSIMVLVCAVNLYFVISYV. Topologically, residues 486 to 493 are extracellular; sequence PSLPHPDY. A helical membrane pass occupies residues 494–513; the sequence is FSLVALLAAAYLGLTTYLVW. Residues 514 to 548 are Cytoplasmic-facing; the sequence is TCLITQGATLLAHSSHQRFLYGLPEEDQENGRTSG.

This sequence belongs to the NRAMP family.

The protein localises to the late endosome membrane. It localises to the lysosome membrane. It catalyses the reaction Zn(2+)(in) + H(+)(out) = Zn(2+)(out) + H(+)(in). It carries out the reaction Fe(2+)(in) + H(+)(out) = Fe(2+)(out) + H(+)(in). The enzyme catalyses Mn(2+)(in) + H(+)(out) = Mn(2+)(out) + H(+)(in). In terms of biological role, macrophage-specific antiporter that fluxes metal ions in either direction against a proton gradient. Localized to late endosomal lysosomal membranes, delivers bivalent cations from the cytosol into these acidic compartments where they may directly affect antimicrobial activity. Involved in iron metabolism and host natural resistance to infection with intracellular parasites. Pathogen resistance involves sequestration of Fe(2+) and Mn(2+), cofactors of both prokaryotic and eukaryotic catalases and superoxide dismutases, not only to protect the macrophage against its own generation of reactive oxygen species, but to deny the cations to the pathogen for synthesis of its protective enzymes. In Cervus elaphus (Red deer), this protein is Natural resistance-associated macrophage protein 1 (SLC11A1).